We begin with the raw amino-acid sequence, 303 residues long: Lipoyl synthase (303 aa).

Residues Cys35, Cys40, Cys46, Cys61, Cys65, Cys68, and Ser273 each coordinate [4Fe-4S] cluster. One can recognise a Radical SAM core domain in the interval 47–262 (FRERQATFLI…KELAEKMGFR (216 aa)).

The protein belongs to the radical SAM superfamily. Lipoyl synthase family. The cofactor is [4Fe-4S] cluster.

The protein localises to the cytoplasm. It carries out the reaction [[Fe-S] cluster scaffold protein carrying a second [4Fe-4S](2+) cluster] + N(6)-octanoyl-L-lysyl-[protein] + 2 oxidized [2Fe-2S]-[ferredoxin] + 2 S-adenosyl-L-methionine + 4 H(+) = [[Fe-S] cluster scaffold protein] + N(6)-[(R)-dihydrolipoyl]-L-lysyl-[protein] + 4 Fe(3+) + 2 hydrogen sulfide + 2 5'-deoxyadenosine + 2 L-methionine + 2 reduced [2Fe-2S]-[ferredoxin]. It participates in protein modification; protein lipoylation via endogenous pathway; protein N(6)-(lipoyl)lysine from octanoyl-[acyl-carrier-protein]: step 2/2. Functionally, catalyzes the radical-mediated insertion of two sulfur atoms into the C-6 and C-8 positions of the octanoyl moiety bound to the lipoyl domains of lipoate-dependent enzymes, thereby converting the octanoylated domains into lipoylated derivatives. This chain is Lipoyl synthase, found in Geobacter sulfurreducens (strain ATCC 51573 / DSM 12127 / PCA).